Here is a 462-residue protein sequence, read N- to C-terminus: tRNA modification GTPase MnmE (462 aa).

(6S)-5-formyl-5,6,7,8-tetrahydrofolate-binding residues include arginine 26, glutamate 91, and arginine 130. Residues 228-382 form the TrmE-type G domain; that stretch reads GLSTAKIGRP…IEERINDIFF (155 aa). Residue asparagine 238 coordinates K(+). GTP-binding positions include 238-243, 257-263, and 282-285; these read NVGKSQ, TDIEGTT, and DTAG. Mg(2+) is bound at residue serine 242. Residues threonine 257, isoleucine 259, and threonine 262 each coordinate K(+). Threonine 263 contacts Mg(2+). Lysine 462 is a binding site for (6S)-5-formyl-5,6,7,8-tetrahydrofolate.

Belongs to the TRAFAC class TrmE-Era-EngA-EngB-Septin-like GTPase superfamily. TrmE GTPase family. Homodimer. Heterotetramer of two MnmE and two MnmG subunits. K(+) serves as cofactor.

Its subcellular location is the cytoplasm. Exhibits a very high intrinsic GTPase hydrolysis rate. Involved in the addition of a carboxymethylaminomethyl (cmnm) group at the wobble position (U34) of certain tRNAs, forming tRNA-cmnm(5)s(2)U34. This Streptococcus agalactiae protein is tRNA modification GTPase MnmE.